We begin with the raw amino-acid sequence, 147 residues long: Large ribosomal subunit protein uL13 (147 aa).

It belongs to the universal ribosomal protein uL13 family. In terms of assembly, part of the 50S ribosomal subunit.

Functionally, this protein is one of the early assembly proteins of the 50S ribosomal subunit, although it is not seen to bind rRNA by itself. It is important during the early stages of 50S assembly. The chain is Large ribosomal subunit protein uL13 from Kineococcus radiotolerans (strain ATCC BAA-149 / DSM 14245 / SRS30216).